Consider the following 227-residue polypeptide: Phosphoribosylformylglycinamidine synthase subunit PurQ (227 aa).

The Glutamine amidotransferase type-1 domain maps to 3–227 (FAVCVFPGSN…LMLWYSLLSD (225 aa)). Cysteine 86 functions as the Nucleophile in the catalytic mechanism. Active-site residues include histidine 203 and glutamate 205.

As to quaternary structure, part of the FGAM synthase complex composed of 1 PurL, 1 PurQ and 2 PurS subunits.

The protein resides in the cytoplasm. It carries out the reaction N(2)-formyl-N(1)-(5-phospho-beta-D-ribosyl)glycinamide + L-glutamine + ATP + H2O = 2-formamido-N(1)-(5-O-phospho-beta-D-ribosyl)acetamidine + L-glutamate + ADP + phosphate + H(+). The catalysed reaction is L-glutamine + H2O = L-glutamate + NH4(+). It functions in the pathway purine metabolism; IMP biosynthesis via de novo pathway; 5-amino-1-(5-phospho-D-ribosyl)imidazole from N(2)-formyl-N(1)-(5-phospho-D-ribosyl)glycinamide: step 1/2. Its function is as follows. Part of the phosphoribosylformylglycinamidine synthase complex involved in the purines biosynthetic pathway. Catalyzes the ATP-dependent conversion of formylglycinamide ribonucleotide (FGAR) and glutamine to yield formylglycinamidine ribonucleotide (FGAM) and glutamate. The FGAM synthase complex is composed of three subunits. PurQ produces an ammonia molecule by converting glutamine to glutamate. PurL transfers the ammonia molecule to FGAR to form FGAM in an ATP-dependent manner. PurS interacts with PurQ and PurL and is thought to assist in the transfer of the ammonia molecule from PurQ to PurL. The chain is Phosphoribosylformylglycinamidine synthase subunit PurQ from Aquifex aeolicus (strain VF5).